The sequence spans 921 residues: TRPM8 channel-associated factor 1 (921 aa).

Residues 542–841 (YCWMSTGLYI…TYLQLQEAFG (300 aa)) enclose the Peptidase M60 domain.

It belongs to the TCAF family. In terms of assembly, interacts with TRPM8 (via N-terminus and C-terminus domains); the interaction inhibits TRPM8 channel activity. Interacts with TRPV6.

The protein localises to the cell membrane. Its function is as follows. Positively regulates the plasma membrane cation channel TRPM8 activity. Involved in the recruitment of TRPM8 to the cell surface. Promotes prostate cancer cell migration inhibition in a TRPM8-dependent manner. The sequence is that of TRPM8 channel-associated factor 1 from Pongo abelii (Sumatran orangutan).